Reading from the N-terminus, the 697-residue chain is tRNA 5-methylaminomethyl-2-thiouridine biosynthesis bifunctional protein MnmC (697 aa).

Positions 1–269 (MNKTPLLSVS…LRQQLQQQFA (269 aa)) are tRNA (mnm(5)s(2)U34)-methyltransferase. Positions 287-697 (IGGGIASASL…RKLLKGKALM (411 aa)) are FAD-dependent cmnm(5)s(2)U34 oxidoreductase.

It in the N-terminal section; belongs to the methyltransferase superfamily. tRNA (mnm(5)s(2)U34)-methyltransferase family. The protein in the C-terminal section; belongs to the DAO family. It depends on FAD as a cofactor.

The protein resides in the cytoplasm. The enzyme catalyses 5-aminomethyl-2-thiouridine(34) in tRNA + S-adenosyl-L-methionine = 5-methylaminomethyl-2-thiouridine(34) in tRNA + S-adenosyl-L-homocysteine + H(+). Catalyzes the last two steps in the biosynthesis of 5-methylaminomethyl-2-thiouridine (mnm(5)s(2)U) at the wobble position (U34) in tRNA. Catalyzes the FAD-dependent demodification of cmnm(5)s(2)U34 to nm(5)s(2)U34, followed by the transfer of a methyl group from S-adenosyl-L-methionine to nm(5)s(2)U34, to form mnm(5)s(2)U34. The chain is tRNA 5-methylaminomethyl-2-thiouridine biosynthesis bifunctional protein MnmC from Shewanella frigidimarina (strain NCIMB 400).